A 327-amino-acid chain; its full sequence is Protein UL95 homolog (327 aa).

Belongs to the herpesviridae UL95 family. Interacts with ORF24; this interaction may serve as a core scaffold for the assembly of the viral transcription initiation complex. Interacts with ORF66. Interacts with ORF18. Interacts with ORF23. Interacts with ORF31. Interacts with host EPAS1; this interaction stabilizes host EPAS1, ensuring its transcriptional activity.

It is found in the host nucleus. Functionally, participates in the expression of late viral mRNAs in part by interacting with ORF24. Expressed before viral DNA replication, assembles at the viral pre-replication complexes (pre-RCs) and thus serves as a hub for recruiting a viral transcription complex to ORF24 to promote late viral gene expression. Also plays a regulatory role in the viral life cycle by regulating host transcriptional regulators HIF1A and EPAS1. The polypeptide is Protein UL95 homolog (ORF34) (Homo sapiens (Human)).